The following is a 133-amino-acid chain: MIVAVGHDLIEIARIRRMLEREGVRAERLFTATELAYAGRYRDPAPSLAARFAAKEAFQKVWLRPHGWRDVWVERERTPDGPFPYAAPMLGFAPAIAGEMHERGWVAHLTLTHTREHASAVVILEHLEQRAAP.

Mg(2+)-binding residues include aspartate 8 and glutamate 56.

The protein belongs to the P-Pant transferase superfamily. AcpS family. Requires Mg(2+) as cofactor.

It localises to the cytoplasm. It carries out the reaction apo-[ACP] + CoA = holo-[ACP] + adenosine 3',5'-bisphosphate + H(+). In terms of biological role, transfers the 4'-phosphopantetheine moiety from coenzyme A to a Ser of acyl-carrier-protein. This chain is Holo-[acyl-carrier-protein] synthase, found in Deinococcus radiodurans (strain ATCC 13939 / DSM 20539 / JCM 16871 / CCUG 27074 / LMG 4051 / NBRC 15346 / NCIMB 9279 / VKM B-1422 / R1).